The sequence spans 89 residues: Small ribosomal subunit protein uS15 (89 aa).

The protein belongs to the universal ribosomal protein uS15 family. Part of the 30S ribosomal subunit. Forms a bridge to the 50S subunit in the 70S ribosome, contacting the 23S rRNA.

Functionally, one of the primary rRNA binding proteins, it binds directly to 16S rRNA where it helps nucleate assembly of the platform of the 30S subunit by binding and bridging several RNA helices of the 16S rRNA. Forms an intersubunit bridge (bridge B4) with the 23S rRNA of the 50S subunit in the ribosome. This is Small ribosomal subunit protein uS15 from Synechococcus elongatus (strain ATCC 33912 / PCC 7942 / FACHB-805) (Anacystis nidulans R2).